Reading from the N-terminus, the 264-residue chain is 3-methyl-2-oxobutanoate hydroxymethyltransferase (264 aa).

Residues D45 and D84 each contribute to the Mg(2+) site. 3-methyl-2-oxobutanoate-binding positions include 45-46, D84, and K112; that span reads DS. E114 lines the Mg(2+) pocket. E181 acts as the Proton acceptor in catalysis.

It belongs to the PanB family. As to quaternary structure, homodecamer; pentamer of dimers. Mg(2+) serves as cofactor.

The protein resides in the cytoplasm. It carries out the reaction 3-methyl-2-oxobutanoate + (6R)-5,10-methylene-5,6,7,8-tetrahydrofolate + H2O = 2-dehydropantoate + (6S)-5,6,7,8-tetrahydrofolate. It functions in the pathway cofactor biosynthesis; (R)-pantothenate biosynthesis; (R)-pantoate from 3-methyl-2-oxobutanoate: step 1/2. In terms of biological role, catalyzes the reversible reaction in which hydroxymethyl group from 5,10-methylenetetrahydrofolate is transferred onto alpha-ketoisovalerate to form ketopantoate. The polypeptide is 3-methyl-2-oxobutanoate hydroxymethyltransferase (Shewanella amazonensis (strain ATCC BAA-1098 / SB2B)).